The sequence spans 203 residues: MESTDKLTDTNAILAYLYETFPLCFIAEGETKPLKIGLFQDLAERLADDSKVSKTQLRVALRRYTSSWRYLKGVKAGAKRIDLDGNECAELEQEHIDHAILTLKESQDKAKAKRQALAPKKPAKKVAPKRAPAVKKERPAPVAAPVIKLVPAKLEDLKQKQRVNVKLGATPVPGVVTDINKEDVLVQLDSGLSIKVRAEHILL.

The interval 111 to 138 (KAKRQALAPKKPAKKVAPKRAPAVKKER) is disordered.

It belongs to the ProQ family.

It localises to the cytoplasm. Functionally, RNA chaperone with significant RNA binding, RNA strand exchange and RNA duplexing activities. The chain is RNA chaperone ProQ from Shewanella frigidimarina (strain NCIMB 400).